We begin with the raw amino-acid sequence, 211 residues long: Small ribosomal subunit protein uS3c (211 aa).

One can recognise a KH type-2 domain in the interval 39–109; sequence IREFAESRLP…NVALYVTKTQ (71 aa).

The protein belongs to the universal ribosomal protein uS3 family. As to quaternary structure, part of the 30S ribosomal subunit.

It is found in the plastid. The protein resides in the chloroplast. The chain is Small ribosomal subunit protein uS3c (rps3) from Ostreococcus tauri.